A 927-amino-acid chain; its full sequence is Huntington interacting protein related 1 (927 aa).

Residues Ala7–Pro136 form the ENTH domain. Residues Arg336–Gln524 adopt a coiled-coil conformation. An I/LWEQ domain is found at Gln673–Ala914.

The protein belongs to the SLA2 family.

Its subcellular location is the cytoplasm. The protein resides in the cytoskeleton. Regulates pre-synaptic vesicle recycling at neuromuscular junctions of mechanosensory neurons. Plays a role in maintaining a normal defecation cycle. This chain is Huntington interacting protein related 1 (hipr-1), found in Caenorhabditis elegans.